The sequence spans 138 residues: Regulator of ribonuclease activity B (138 aa).

Positions 111-138 (WGTYFEDPNGEEGDDDDYVDEDDDGVRH) are disordered. Acidic residues predominate over residues 118–138 (PNGEEGDDDDYVDEDDDGVRH).

Belongs to the RraB family. As to quaternary structure, interacts with the C-terminal region of Rne.

It is found in the cytoplasm. In terms of biological role, globally modulates RNA abundance by binding to RNase E (Rne) and regulating its endonucleolytic activity. Can modulate Rne action in a substrate-dependent manner by altering the composition of the degradosome. The protein is Regulator of ribonuclease activity B of Salmonella typhi.